The primary structure comprises 142 residues: MPKYYCDYCDTFLTHDSPSVRKTHNGGRKHKDNVRMFYQKWMEDQAQKLVDQTARAFATNRMQGAVPRTTMGMAPVPPVGHHPMMGGPPGMPMMAPRPFPGPGVGFPGAPGMPPFPGGPMGMAGPPGMPPMMPRPPQQFRPM.

The segment at 4 to 36 (YYCDYCDTFLTHDSPSVRKTHNGGRKHKDNVRM) adopts a Matrin-type zinc-finger fold.

It belongs to the U1 small nuclear ribonucleoprotein C family. U1 snRNP is composed of the 7 core Sm proteins B/B', D1, D2, D3, E, F and G that assemble in a heptameric protein ring on the Sm site of the small nuclear RNA to form the core snRNP, and at least 3 U1 snRNP-specific proteins U1-70K, U1-A and U1-C. U1-C interacts with U1 snRNA and the 5' splice-site region of the pre-mRNA.

It is found in the nucleus. In terms of biological role, component of the spliceosomal U1 snRNP, which is essential for recognition of the pre-mRNA 5' splice-site and the subsequent assembly of the spliceosome. U1-C is directly involved in initial 5' splice-site recognition for both constitutive and regulated alternative splicing. The interaction with the 5' splice-site seems to precede base-pairing between the pre-mRNA and the U1 snRNA. Stimulates commitment or early (E) complex formation by stabilizing the base pairing of the 5' end of the U1 snRNA and the 5' splice-site region. This chain is U1 small nuclear ribonucleoprotein C, found in Caenorhabditis elegans.